The primary structure comprises 510 residues: Serine/threonine-protein kinase UL13 homolog (510 aa).

Residues 1 to 63 (MDADDTPPNL…WANPSTATCM (63 aa)) form a disordered region. The region spanning 132–458 (RDRPRFAGRG…RRIFQCHAVR (327 aa)) is the Protein kinase domain. Residues 138–146 (AGRGTYGRV) and Lys-157 contribute to the ATP site. Asp-257 acts as the Proton acceptor in catalysis.

The protein belongs to the protein kinase superfamily. Ser/Thr protein kinase family. In terms of processing, autophosphorylated.

The protein localises to the virion tegument. Its subcellular location is the host nucleus. It catalyses the reaction L-seryl-[protein] + ATP = O-phospho-L-seryl-[protein] + ADP + H(+). The enzyme catalyses L-threonyl-[protein] + ATP = O-phospho-L-threonyl-[protein] + ADP + H(+). In terms of biological role, multifunctional serine/threonine kinase that plays a role in several processes including egress of virus particles from the nucleus, modulation of the actin cytoskeleton and regulation of viral and cellular gene expression. Regulates the nuclear localization of viral envelopment factor proteins 24 and 27, by phosphorylating the protein kinase ORF66, indicating a role in nuclear egress. Disrupts host nuclear lamins, including LMNA and LMNB1. Phosphorylates the viral Fc receptor composed of glycoproteins E (gE) and I (gI). Phosphorylation of glycoprotein E (gE) by UL13 alters its subcellular localization, from the host early endosome to the plasma membrane. Participates in the transcriptional regulation of cellular and viral mRNAs mainly by phosphorylating the viral transcriptional regulator IE63. The chain is Serine/threonine-protein kinase UL13 homolog from Varicella-zoster virus (strain Dumas) (HHV-3).